We begin with the raw amino-acid sequence, 92 residues long: MSASFDRYVSFQHCDWEGRSERVMQRLQRHVEAAENPFWAYFAQKRAELRDKQGLDDLRILHNYLPTLRELLEDNGDLETLEMLEDLEANLM.

This sequence belongs to the CowN family.

In terms of biological role, is required to sustain N(2)-dependent growth in the presence of low levels of carbon monoxide (CO). Probably acts by protecting the N(2) fixation ability of the nitrogenase complex, which is inactivated in the presence of CO. In Rhodopseudomonas palustris (strain ATCC BAA-98 / CGA009), this protein is N(2)-fixation sustaining protein CowN.